A 232-amino-acid chain; its full sequence is UPF0758 protein BH3032 (232 aa).

Positions 107–229 (VIRTPEDVSR…FVSLKEKGHL (123 aa)) constitute an MPN domain. Zn(2+) contacts are provided by histidine 178, histidine 180, and aspartate 191. Positions 178–191 (HNHPSGDPTPSRED) match the JAMM motif motif.

The protein belongs to the UPF0758 family.

In Halalkalibacterium halodurans (strain ATCC BAA-125 / DSM 18197 / FERM 7344 / JCM 9153 / C-125) (Bacillus halodurans), this protein is UPF0758 protein BH3032.